The chain runs to 522 residues: Phosphatidylinositol 3,4,5-trisphosphate 3-phosphatase TPTE2 (522 aa).

The span at 1-11 shows a compositional bias: polar residues; the sequence is MNESPQTNEFK. The interval 1–28 is disordered; it reads MNESPQTNEFKGTTEEAPAKESPHTSEF. Over residues 12–27 the composition is skewed to basic and acidic residues; it reads GTTEEAPAKESPHTSE. The next 3 helical transmembrane spans lie at 66 to 86, 111 to 131, and 146 to 166; these read IVHSIVSSFAFGIFGVFLVLL, ISLAIGLFFLMDVLLRVFVEG, and AIIVIPLLVDVIYIFFDIKLL. The region spanning 210–386 is the Phosphatase tensin-type domain; that stretch reads RRYTRDGFDL…GYFAQVKHLY (177 aa). Catalysis depends on Cys320, which acts as the Phosphocysteine intermediate. A C2 tensin-type domain is found at 393–522; that stretch reads RRILFIKRFI…FAVEILFGEK (130 aa).

In terms of tissue distribution, isoform 3 is expressed in testis, brain and stomach while isoform 4 seems to be testis-specific.

The protein localises to the endoplasmic reticulum membrane. It is found in the golgi apparatus membrane. Its subcellular location is the cytoplasm. It carries out the reaction a 1,2-diacyl-sn-glycero-3-phospho-(1D-myo-inositol-3,4,5-trisphosphate) + H2O = a 1,2-diacyl-sn-glycero-3-phospho-(1D-myo-inositol-4,5-bisphosphate) + phosphate. Acts as a lipid phosphatase, removing the phosphate in the D3 position of the inositol ring from phosphatidylinositol 3,4,5-trisphosphate. In terms of biological role, shows no phosphoinositide phosphatase activity. This is Phosphatidylinositol 3,4,5-trisphosphate 3-phosphatase TPTE2 (TPTE2) from Homo sapiens (Human).